Here is a 269-residue protein sequence, read N- to C-terminus: 15-hydroxyprostaglandin dehydrogenase [NAD(+)] (269 aa).

NAD(+)-binding positions include 12–20, 36–37, 63–65, and asparagine 91; these read GAAQGIGKA, DW, and CDV. Substrate is bound by residues serine 138 and glutamine 148. Tyrosine 151 serves as the catalytic Proton acceptor. Residues 151 to 155 and 186 to 188 each bind NAD(+); these read YCASK and VDT.

It belongs to the short-chain dehydrogenases/reductases (SDR) family. Homodimer. Expressed in proximal convoluted tubules of the kidney, where it colocalizes with the prostaglandin transporter SLC22A22 (at protein level). Expressed in lung, intestine, stomach and liver.

It localises to the cytoplasm. The catalysed reaction is prostaglandin E2 + NAD(+) = 15-oxoprostaglandin E2 + NADH + H(+). It carries out the reaction (15S)-hydroxy-(5Z,8Z,11Z,13E)-eicosatetraenoate + NAD(+) = 15-oxo-(5Z,8Z,11Z,13E)-eicosatetraenoate + NADH + H(+). It catalyses the reaction (11R)-hydroxy-(5Z,8Z,12E,14Z)-eicosatetraenoate + NAD(+) = 11-oxo-(5Z,8Z,12E,14Z)-eicosatetraenoate + NADH + H(+). The enzyme catalyses lipoxin A4 + NAD(+) = 15-oxo-(5S,6R)-dihydroxy-(7E,9E,11Z,13E)-eicosatetraenoate + NADH + H(+). The catalysed reaction is 15-oxo-(5S,6R)-dihydroxy-(7E,9E,11Z)-eicosatrienoate + NADH + H(+) = (5S,6R,15S)-trihydroxy-(7E,9E,11Z)-eicosatrienoate + NAD(+). It carries out the reaction prostaglandin A1 + NAD(+) = 15-oxo-prostaglandin A1 + NADH + H(+). It catalyses the reaction prostaglandin E1 + NAD(+) = 15-oxoprostaglandin E1 + NADH + H(+). The enzyme catalyses 14-hydroxy-(4Z,7Z,10Z,12E,16Z,19Z)-docosahexaenoate + NAD(+) = 14-oxo-(4Z,7Z,10Z,12E,16Z,19Z)-docosahexaenoate + NADH + H(+). The catalysed reaction is resolvin E1 + NAD(+) = 18-oxo-resolvin E1 + NADH + H(+). It carries out the reaction resolvin D1 + NAD(+) = 8-oxoresolvin D1 + NADH + H(+). It catalyses the reaction resolvin D1 + NAD(+) = 17-oxoresolvin D1 + NADH + H(+). The enzyme catalyses resolvin D2 + NAD(+) = 7-oxoresolvin D2 + NADH + H(+). The catalysed reaction is resolvin D2 + NAD(+) = 16-oxoresolvin D2 + NADH + H(+). Its function is as follows. Catalyzes the NAD-dependent dehydrogenation (oxidation) of a broad array of hydroxylated polyunsaturated fatty acids (mainly eicosanoids and docosanoids, including prostaglandins, lipoxins and resolvins), yielding their corresponding keto (oxo) metabolites. Decreases the levels of the pro-proliferative prostaglandins such as prostaglandin E2 (whose activity is increased in cancer because of an increase in the expression of cyclooxygenase 2) and generates oxo-fatty acid products that can profoundly influence cell function by abrogating pro-inflammatory cytokine expression. Converts resolvins E1, D1 and D2 to their oxo products, which represents a mode of resolvin inactivation. Resolvin E1 plays important roles during the resolution phase of acute inflammation, while resolvins D1 and D2 have a unique role in obesity-induced adipose inflammation. The sequence is that of 15-hydroxyprostaglandin dehydrogenase [NAD(+)] (Hpgd) from Mus musculus (Mouse).